The following is a 93-amino-acid chain: MHKEEIILLHLTLYNIKKLFENAGIANGHFKAYDELGVQPVHIHKSKTEHKKAISLLCKGISEIFRERSPEDLIESENLKFVIESIAPELCEP.

Belongs to the UPF0058 family.

The chain is UPF0058 protein AF_0738 from Archaeoglobus fulgidus (strain ATCC 49558 / DSM 4304 / JCM 9628 / NBRC 100126 / VC-16).